The chain runs to 577 residues: Outer spore wall assembly protein SHE10 (577 aa).

A signal peptide spans 1 to 23 (MGKLIKLITTLTVLVSLLQYCCE). Coiled-coil stretches lie at residues 379–416 (NETR…ENVE) and 513–561 (ILRS…EEDV). Residues 525 to 545 (RERKERERKEREKAAAEEFQR) are compositionally biased toward basic and acidic residues. Residues 525–577 (RERKERERKEREKAAAEEFQRQQELLLQQEEEDEEDVSYTSTSTITTTTTMTL) form a disordered region. The segment covering 562–577 (SYTSTSTITTTTTMTL) has biased composition (low complexity).

The protein belongs to the SHE10 family. In terms of assembly, component of the mitochondria-localized RNase mitochondrial RNA-processing (RNase MRP) composed of one single RNA encoded by the NME1 gene and at least 31 proteins. Absent in the nucleus-localized RNase MRP (NuMRP).

The protein resides in the mitochondrion. Functionally, involved in spore wall assembly. May be a component of the mitochondrial RNase MRP (MtMRP), a ribonucleoprotein endoribonuclease involved in the cleaving RNA transcripts to generate primers for DNA replication in mitochondria. The polypeptide is Outer spore wall assembly protein SHE10 (Saccharomyces cerevisiae (strain RM11-1a) (Baker's yeast)).